A 531-amino-acid polypeptide reads, in one-letter code: Fe-S cluster assembly factor HCF101, chloroplastic (531 aa).

The transit peptide at 1–62 (MRNLRAAAPA…PRRVGRLRRR (62 aa)) directs the protein to the chloroplast. The span at 17-27 (APPLLLPPSTP) shows a compositional bias: pro residues. Positions 17-37 (APPLLLPPSTPTPRGAFSAKA) are disordered. A compositionally biased stretch (low complexity) spans 28–37 (TPRGAFSAKA). 181–188 (CKGGVGKS) is a binding site for ATP.

This sequence belongs to the Mrp/NBP35 ATP-binding proteins family. It depends on [4Fe-4S] cluster as a cofactor.

The protein resides in the plastid. The protein localises to the chloroplast stroma. Functionally, required for photosystem I (PSI) biosynthesis and assembly. May serve as a chloroplast scaffold protein that specifically assembles iron-sulfur (4Fe-4S) clusters and transfers them to the chloroplast PSI and ferredoxin-thioredoxin (FTR) complexes. Probably not required for assembly or stability of plastidic 2Fe-2S clusters. The protein is Fe-S cluster assembly factor HCF101, chloroplastic (HCF101) of Oryza sativa subsp. japonica (Rice).